The primary structure comprises 241 residues: RecQ-mediated genome instability protein 1 (241 aa).

The protein belongs to the RMI1 family. In terms of assembly, forms a complex with SGS1 and TOP3.

The protein localises to the cytoplasm. The protein resides in the nucleus. In terms of biological role, structure-specific DNA-binding protein with a preference for cruciform structures. Also binds single-stranded DNA (ssDNA). Functions together with SGS1 and TOP3 to maintain genome integrity. Essential for proper meiotic cell division. Required for normal S-phase progression and DNA damage response. Required for resistance to the DNA-damaging agent methyl methanesulfonate (MMS). This Saccharomyces cerevisiae (strain ATCC 204508 / S288c) (Baker's yeast) protein is RecQ-mediated genome instability protein 1.